The chain runs to 87 residues: Small ribosomal subunit protein bS16 (87 aa).

The protein belongs to the bacterial ribosomal protein bS16 family.

This is Small ribosomal subunit protein bS16 from Ehrlichia ruminantium (strain Welgevonden).